The following is a 513-amino-acid chain: Protein indeterminate-domain 11 (513 aa).

Residues Met-1–Glu-84 are disordered. Polar residues predominate over residues Gln-10 to Asn-45. The segment covering Gln-51–Gln-60 has biased composition (low complexity). A Phosphoserine modification is found at Ser-89. 2 consecutive C2H2-type zinc fingers follow at residues Phe-99–His-121 and Tyr-141–His-171. The Nuclear localization signal signature appears at Ile-163–Lys-170. The C2H2-type 2; degenerate zinc-finger motif lies at Trp-176 to Gly-199. Zn(2+) is bound by residues Cys-178, Cys-181, His-194, Cys-198, Cys-205, Cys-207, His-220, and Cys-224. A CCHC-type 2; atypical zinc finger spans residues Tyr-203–Ala-226. Residues Arg-213–Glu-225 are SHR-binding. Disordered stretches follow at residues Ala-255 to His-280 and Pro-334 to Ser-358. The span at Thr-264 to His-280 shows a compositional bias: low complexity.

The protein resides in the nucleus. Functionally, probable transcription factor. The chain is Protein indeterminate-domain 11 from Arabidopsis thaliana (Mouse-ear cress).